The primary structure comprises 374 residues: Beta sliding clamp (374 aa).

The protein belongs to the beta sliding clamp family. Forms a ring-shaped head-to-tail homodimer around DNA which binds and tethers DNA polymerases and other proteins to the DNA. The DNA replisome complex has a single clamp-loading complex (3 tau and 1 each of delta, delta', psi and chi subunits) which binds 3 Pol III cores (1 core on the leading strand and 2 on the lagging strand) each with a beta sliding clamp dimer. Additional proteins in the replisome are other copies of gamma, psi and chi, Ssb, DNA helicase and RNA primase.

It localises to the cytoplasm. In terms of biological role, confers DNA tethering and processivity to DNA polymerases and other proteins. Acts as a clamp, forming a ring around DNA (a reaction catalyzed by the clamp-loading complex) which diffuses in an ATP-independent manner freely and bidirectionally along dsDNA. Initially characterized for its ability to contact the catalytic subunit of DNA polymerase III (Pol III), a complex, multichain enzyme responsible for most of the replicative synthesis in bacteria; Pol III exhibits 3'-5' exonuclease proofreading activity. The beta chain is required for initiation of replication as well as for processivity of DNA replication. This is Beta sliding clamp (dnaN) from Helicobacter pylori (strain J99 / ATCC 700824) (Campylobacter pylori J99).